We begin with the raw amino-acid sequence, 588 residues long: Adenine deaminase (588 aa).

Belongs to the metallo-dependent hydrolases superfamily. Adenine deaminase family. Mn(2+) serves as cofactor.

It catalyses the reaction adenine + H2O + H(+) = hypoxanthine + NH4(+). The chain is Adenine deaminase from Desulforamulus reducens (strain ATCC BAA-1160 / DSM 100696 / MI-1) (Desulfotomaculum reducens).